Reading from the N-terminus, the 93-residue chain is Protein BOLA2 (93 aa).

C29 carries the S-glutathionyl cysteine; transient; alternate modification. The segment at 72 to 93 (KAQTPQQWKPPSQDSATLTKDA) is disordered.

It belongs to the bolA/yrbA family. Homodimer. Interacts in vitro with GRXS14, GRXS15, GRXS16 and GRXS17, but not with GRXC5. Interacts in vivo only with GRXS17. Can be either glutathionylated or forming covalent homodimers, depending on the oxidation state.

Its subcellular location is the cytoplasm. It localises to the nucleus. In terms of biological role, may act either alone or in interaction with glutaredoxin as a redox-regulated transcriptional regulator, or as a factor regulating Fe-S cluster biogenesis. The GRXS17-BOLA2 heterodimer binds a labile, oxygen sensitive iron-sulfur cluster. This chain is Protein BOLA2, found in Arabidopsis thaliana (Mouse-ear cress).